The following is a 190-amino-acid chain: Potassium-transporting ATPase KdpC subunit (190 aa).

Residues 10-30 traverse the membrane as a helical segment; the sequence is TFIFLLLITGGVYPLLTTVLG.

This sequence belongs to the KdpC family. In terms of assembly, the system is composed of three essential subunits: KdpA, KdpB and KdpC.

Its subcellular location is the cell inner membrane. Its function is as follows. Part of the high-affinity ATP-driven potassium transport (or Kdp) system, which catalyzes the hydrolysis of ATP coupled with the electrogenic transport of potassium into the cytoplasm. This subunit acts as a catalytic chaperone that increases the ATP-binding affinity of the ATP-hydrolyzing subunit KdpB by the formation of a transient KdpB/KdpC/ATP ternary complex. This chain is Potassium-transporting ATPase KdpC subunit, found in Escherichia coli O139:H28 (strain E24377A / ETEC).